The sequence spans 235 residues: Probable transcriptional regulatory protein CJJ81176_1187 (235 aa).

This sequence belongs to the TACO1 family.

Its subcellular location is the cytoplasm. This is Probable transcriptional regulatory protein CJJ81176_1187 from Campylobacter jejuni subsp. jejuni serotype O:23/36 (strain 81-176).